An 85-amino-acid polypeptide reads, in one-letter code: Large ribosomal subunit protein bL27 (85 aa).

The disordered stretch occupies residues 1–21 (MAHKKGASSSRNGRDSNAQRL). Polar residues predominate over residues 7-19 (ASSSRNGRDSNAQ).

The protein belongs to the bacterial ribosomal protein bL27 family.

The sequence is that of Large ribosomal subunit protein bL27 from Beutenbergia cavernae (strain ATCC BAA-8 / DSM 12333 / CCUG 43141 / JCM 11478 / NBRC 16432 / NCIMB 13614 / HKI 0122).